The sequence spans 461 residues: MVEFRFDIKPLFAQPIIKVTSNLLPNTFRGDRRQCLDATSKMTEIIDQLGQLSATSQGLSKPVTTAQRLRMSDNQTIYLLADNEAGHNGAVLGLLKVGTKNLYLFDEAGKTRMVEQTPSILDFYVHESRQRAGLGKRLFQTMLNEEQWTARKCSVDRPSEKLLSFLSKHYGLKRIIPQANNFVLYEGFFNDGESGNGGGNGHANGTPNGLHITNSPNTHLFGATYLGEDSNQRRGSQQQTTPNARLQQITQISPSGRYGAKRPTCSMAEIIHAGNSKGGNGNGSAEANSGNGNHDIPEIAEQLQRQSLADLEANSYEPEPEVEPEPEPEPEPEPEPEVITPPSPPPKSHTPTPPSVRSPEVAESIVGDNRRAPAFQLSKQHTGMKNRSFGVGMAVMPSSKMEFDQMEREDFGVVKINRPPGHEVTSPGQDNTDAMSTVSSGGGGLTDQGYYDLKFYHNKLW.

The 188-residue stretch at 2-189 (VEFRFDIKPL…NNFVLYEGFF (188 aa)) folds into the N-acetyltransferase domain. Acetyl-CoA is bound by residues 123–136 (FYVHESRQRAGLGK) and 159–168 (SEKLLSFLSK). Disordered stretches follow at residues 196 to 295 (NGGG…GNHD), 314 to 362 (NSYE…PEVA), and 418 to 443 (RPPGHEVTSPGQDNTDAMSTVSSGGG). Residues 233–254 (RRGSQQQTTPNARLQQITQISP) show a composition bias toward polar residues. Low complexity predominate over residues 283 to 293 (GSAEANSGNGN). A compositionally biased stretch (acidic residues) spans 318–336 (PEPEVEPEPEPEPEPEPEP). A compositionally biased stretch (pro residues) spans 339–356 (ITPPSPPPKSHTPTPPSV). The segment covering 426–439 (SPGQDNTDAMSTVS) has biased composition (polar residues).

It belongs to the acetyltransferase ATAT1 family.

The enzyme catalyses L-lysyl-[alpha-tubulin] + acetyl-CoA = N(6)-acetyl-L-lysyl-[alpha-tubulin] + CoA + H(+). Functionally, specifically acetylates 'Lys-40' in alpha-tubulin on the lumenal side of microtubules. Promotes microtubule destabilization and accelerates microtubule dynamics; this activity may be independent of acetylation activity. Acetylates alpha-tubulin with a slow enzymatic rate, due to a catalytic site that is not optimized for acetyl transfer. Enters the microtubule through each end and diffuses quickly throughout the lumen of microtubules. Acetylates only long/old microtubules because of its slow acetylation rate since it does not have time to act on dynamically unstable microtubules before the enzyme is released. Acetylates central spindle microtubules. The sequence is that of Alpha-tubulin N-acetyltransferase 1 from Drosophila melanogaster (Fruit fly).